A 241-amino-acid chain; its full sequence is Chalcone--flavanone isomerase C (241 aa).

The substrate site is built by T50, N115, and S192.

It belongs to the chalcone isomerase family.

It catalyses the reaction a chalcone = a flavanone.. The protein operates within secondary metabolite biosynthesis; flavonoid biosynthesis. Its function is as follows. Catalyzes the intramolecular cyclization of bicyclic chalcones into tricyclic (S)-flavanones. Responsible for the isomerization of 4,2',4',6'-tetrahydroxychalcone (also termed chalcone) into naringenin. This is Chalcone--flavanone isomerase C (CHI3) from Petunia hybrida (Petunia).